The following is a 231-amino-acid chain: Probable methylthioribulose-1-phosphate dehydratase (231 aa).

Cysteine 82 lines the substrate pocket. 2 residues coordinate Zn(2+): histidine 100 and histidine 102. Glutamate 123 acts as the Proton donor/acceptor in catalysis. Histidine 181 provides a ligand contact to Zn(2+).

The protein belongs to the aldolase class II family. MtnB subfamily. Requires Zn(2+) as cofactor.

It localises to the cytoplasm. The catalysed reaction is 5-(methylsulfanyl)-D-ribulose 1-phosphate = 5-methylsulfanyl-2,3-dioxopentyl phosphate + H2O. The protein operates within amino-acid biosynthesis; L-methionine biosynthesis via salvage pathway; L-methionine from S-methyl-5-thio-alpha-D-ribose 1-phosphate: step 2/6. Catalyzes the dehydration of methylthioribulose-1-phosphate (MTRu-1-P) into 2,3-diketo-5-methylthiopentyl-1-phosphate (DK-MTP-1-P). The sequence is that of Probable methylthioribulose-1-phosphate dehydratase from Dictyostelium discoideum (Social amoeba).